A 502-amino-acid polypeptide reads, in one-letter code: Arabinose import ATP-binding protein AraG (502 aa).

2 ABC transporter domains span residues 5–240 (LEFS…MVGR) and 253–496 (LGGI…LPDK). Residue 37–44 (GENGAGKS) coordinates ATP.

It belongs to the ABC transporter superfamily. Arabinose importer (TC 3.A.1.2.2) family. In terms of assembly, the complex is composed of two ATP-binding proteins (AraG), two transmembrane proteins (AraH) and a solute-binding protein (AraF).

It is found in the cell inner membrane. It catalyses the reaction L-arabinose(out) + ATP + H2O = L-arabinose(in) + ADP + phosphate + H(+). Functionally, part of the ABC transporter complex AraFGH involved in arabinose import. Responsible for energy coupling to the transport system. This Rhizobium johnstonii (strain DSM 114642 / LMG 32736 / 3841) (Rhizobium leguminosarum bv. viciae) protein is Arabinose import ATP-binding protein AraG.